A 401-amino-acid polypeptide reads, in one-letter code: Canavanine gamma-lyase (401 aa).

K214 is modified (N6-(pyridoxal phosphate)lysine).

The protein belongs to the trans-sulfuration enzymes family. Pyridoxal 5'-phosphate serves as cofactor.

The enzyme catalyses L-canavanine + H2O = N-hydroxyguanidine + L-homoserine. Functionally, lyase involved in the degradation of canavanine, the delta-oxa-analog of arginine, allowing growth on canavanine as sole nitrogen and carbon source. Catalyzes the elimination of hydroxyguanidine from canavanine with a subsequent water addition to yield homoserine. This Rhizobium leguminosarum bv. trifolii (strain WSM2304) protein is Canavanine gamma-lyase.